We begin with the raw amino-acid sequence, 380 residues long: G-protein coupled receptor (380 aa).

Helical transmembrane passes span V26–I46, L60–V80, F97–T117, V145–I165, A184–L204, I220–A240, and V275–I295. An intrachain disulfide couples C95 to C170. The tract at residues S328–G380 is disordered.

This sequence belongs to the G-protein coupled receptor 1 family.

Its subcellular location is the host membrane. In Elephas maximus (Indian elephant), this protein is G-protein coupled receptor.